The following is a 607-amino-acid chain: UvrABC system protein C (607 aa).

Residues 16 to 94 form the GIY-YIG domain; sequence GRPGVYRMFD…IKEWRPPYNI (79 aa). The 36-residue stretch at 203–238 folds into the UVR domain; that stretch reads NALSDELNASMEKAAMALDFERAAELRDQVALLRRV.

The protein belongs to the UvrC family. Interacts with UvrB in an incision complex.

The protein resides in the cytoplasm. The UvrABC repair system catalyzes the recognition and processing of DNA lesions. UvrC both incises the 5' and 3' sides of the lesion. The N-terminal half is responsible for the 3' incision and the C-terminal half is responsible for the 5' incision. This is UvrABC system protein C from Pseudomonas syringae pv. syringae (strain B728a).